Here is a 598-residue protein sequence, read N- to C-terminus: Elongation factor 4 (598 aa).

Positions lysine 2–valine 184 constitute a tr-type G domain. Residues aspartate 14–threonine 19 and asparagine 131–aspartate 134 each bind GTP.

This sequence belongs to the TRAFAC class translation factor GTPase superfamily. Classic translation factor GTPase family. LepA subfamily.

Its subcellular location is the cell inner membrane. The catalysed reaction is GTP + H2O = GDP + phosphate + H(+). Required for accurate and efficient protein synthesis under certain stress conditions. May act as a fidelity factor of the translation reaction, by catalyzing a one-codon backward translocation of tRNAs on improperly translocated ribosomes. Back-translocation proceeds from a post-translocation (POST) complex to a pre-translocation (PRE) complex, thus giving elongation factor G a second chance to translocate the tRNAs correctly. Binds to ribosomes in a GTP-dependent manner. The polypeptide is Elongation factor 4 (Psychromonas ingrahamii (strain DSM 17664 / CCUG 51855 / 37)).